The sequence spans 188 residues: MVKTVYITGYKSFELNIYKDDAPEVYYLKQFIAHKLKHLLDEGLEWVLIQGQMGIELWSAEVVIELKKDFPDIKLGIITPFIGHTQRWNDKNQAKYTNIIQQADFTESIHHTEYMGAYQFKQADQFMLDHTDYTILIYDDEQEASPKYFKAMLVEFMEKTNYTCDIVTFDELTDFINDLQWSQDQSFE.

This sequence belongs to the UPF0398 family.

The protein is UPF0398 protein SE_1135 of Staphylococcus epidermidis (strain ATCC 12228 / FDA PCI 1200).